The following is a 444-amino-acid chain: Tubulin beta chain (444 aa).

The GTP site is built by Gln11, Glu69, Ser138, Gly142, Thr143, Gly144, Asn204, and Asn226. Mg(2+) is bound at residue Glu69.

This sequence belongs to the tubulin family. In terms of assembly, dimer of alpha and beta chains. A typical microtubule is a hollow water-filled tube with an outer diameter of 25 nm and an inner diameter of 15 nM. Alpha-beta heterodimers associate head-to-tail to form protofilaments running lengthwise along the microtubule wall with the beta-tubulin subunit facing the microtubule plus end conferring a structural polarity. Microtubules usually have 13 protofilaments but different protofilament numbers can be found in some organisms and specialized cells. It depends on Mg(2+) as a cofactor.

It is found in the cytoplasm. Its subcellular location is the cytoskeleton. In terms of biological role, tubulin is the major constituent of microtubules, a cylinder consisting of laterally associated linear protofilaments composed of alpha- and beta-tubulin heterodimers. Microtubules grow by the addition of GTP-tubulin dimers to the microtubule end, where a stabilizing cap forms. Below the cap, tubulin dimers are in GDP-bound state, owing to GTPase activity of alpha-tubulin. This chain is Tubulin beta chain (TBB), found in Onchocerca gibsoni.